The primary structure comprises 187 residues: Endoribonuclease YbeY (187 aa).

The Zn(2+) site is built by histidine 148, histidine 152, and histidine 158.

The protein belongs to the endoribonuclease YbeY family. Requires Zn(2+) as cofactor.

It is found in the cytoplasm. In terms of biological role, single strand-specific metallo-endoribonuclease involved in late-stage 70S ribosome quality control and in maturation of the 3' terminus of the 16S rRNA. The polypeptide is Endoribonuclease YbeY (Ralstonia nicotianae (strain ATCC BAA-1114 / GMI1000) (Ralstonia solanacearum)).